A 365-amino-acid polypeptide reads, in one-letter code: tRNA/tmRNA (uracil-C(5))-methyltransferase (365 aa).

Positions 189, 217, 222, 238, and 298 each coordinate S-adenosyl-L-methionine. C323 functions as the Nucleophile in the catalytic mechanism. E357 serves as the catalytic Proton acceptor.

The protein belongs to the class I-like SAM-binding methyltransferase superfamily. RNA M5U methyltransferase family. TrmA subfamily.

It catalyses the reaction uridine(54) in tRNA + S-adenosyl-L-methionine = 5-methyluridine(54) in tRNA + S-adenosyl-L-homocysteine + H(+). It carries out the reaction uridine(341) in tmRNA + S-adenosyl-L-methionine = 5-methyluridine(341) in tmRNA + S-adenosyl-L-homocysteine + H(+). Dual-specificity methyltransferase that catalyzes the formation of 5-methyluridine at position 54 (m5U54) in all tRNAs, and that of position 341 (m5U341) in tmRNA (transfer-mRNA). This chain is tRNA/tmRNA (uracil-C(5))-methyltransferase, found in Shewanella sp. (strain W3-18-1).